The chain runs to 65 residues: Large ribosomal subunit protein bL35 (65 aa).

It belongs to the bacterial ribosomal protein bL35 family.

This is Large ribosomal subunit protein bL35 from Aliarcobacter butzleri (strain RM4018) (Arcobacter butzleri).